Here is a 275-residue protein sequence, read N- to C-terminus: Leucine-rich repeat-containing protein 3C (275 aa).

The first 41 residues, 1-41 (MRMTSSSFVSYCTPGLCQFMAMLPTAGHLLPLLLVIGTGGT), serve as a signal peptide directing secretion. The 38-residue stretch at 42–79 (VPSPQVPPRGCYVAKEAGERTFRCSQAGLSAVPSGIPN) folds into the LRRNT domain. LRR repeat units follow at residues 80–101 (DTRK…AFQH), 104–125 (VLEE…AFQG), and 129–150 (TLRH…AFVG). An N-linked (GlcNAc...) asparagine glycan is attached at Asn-156. Residues 160–212 (NPWHCDCALQEVLRQVRLVPGTGTGIVCGSGARPDLVGQEFLLLAGEEELCGS) enclose the LRRCT domain. A helical transmembrane segment spans residues 225–245 (LLVTMGGWLTLMVAYLVHYVW).

Belongs to the LRRC3 family.

The protein resides in the membrane. In Homo sapiens (Human), this protein is Leucine-rich repeat-containing protein 3C (LRRC3C).